The following is a 348-amino-acid chain: MQHELMDNHDFLAFTLAHPHGIAQRFSFELGQHTQVEVWDTGVIAFLPKEKYTAQAPKQVILSCAVHGNETAPIEICNRLITELLTEKVQAKHRTLFLIGNPPAIHNQTRFIEENMNRLFSGAHSKGEGLTHAERIRAKALEDYVAEFYLGAPSNEQRIHYDLHTAIRPSKHEKFAIYPYRPGRAYSGEQIMFLAACGVDTILFHHEPTTTFSYYSSEQFNADAFTVELGKVMPFGQNDMSRFEQTQTMLTKLVSGEALGLSAFSAEKVNLYKVCRSINKRFEDFAFNFADQAENFSAFTKGEVLATEGGEQVLVEQPQEAIVFPNAKVPVGQRTVLCLVPAPNENIR.

Residues His-67, Glu-70, and His-164 each coordinate Zn(2+). Glu-228 is an active-site residue.

It belongs to the AspA/AstE family. Succinylglutamate desuccinylase subfamily. Zn(2+) serves as cofactor.

It catalyses the reaction N-succinyl-L-glutamate + H2O = L-glutamate + succinate. It functions in the pathway amino-acid degradation; L-arginine degradation via AST pathway; L-glutamate and succinate from L-arginine: step 5/5. Its function is as follows. Transforms N(2)-succinylglutamate into succinate and glutamate. The protein is Succinylglutamate desuccinylase of Shewanella denitrificans (strain OS217 / ATCC BAA-1090 / DSM 15013).